A 508-amino-acid chain; its full sequence is Probable metalloreductase AIM14 (508 aa).

A run of 8 helical transmembrane segments spans residues 18–38 (LPYGYYVLGVIVFYTIFLIVM), 70–90 (PLLLLLVFVPFIHKYSLVAYI), 100–120 (LSYVLVILNVLLTLRPANPIL), 137–157 (FVTVIGIIHGIGFIVKWSLDP), 168–188 (LFNFIGVIAFVPLFILMFASV), 198–218 (SFYVIHQLGQWAMVFLVPIHA), 222–242 (VTVPYFFILLALYIWRGISYI), and 347–367 (VAIVVGGSGISFGLSIFKYLQ). In terms of domain architecture, Ferric oxidoreductase spans 97–214 (LGRLSYVLVI…LGQWAMVFLV (118 aa)). One can recognise an FAD-binding FR-type domain in the interval 241–361 (YIYYSTTVNV…GGSGISFGLS (121 aa)).

It belongs to the ferric reductase (FRE) family. AIM14 subfamily.

Its subcellular location is the membrane. In terms of biological role, probable cell surface metalloreductase. May be involved in iron or copper homeostasis. In Kluyveromyces lactis (strain ATCC 8585 / CBS 2359 / DSM 70799 / NBRC 1267 / NRRL Y-1140 / WM37) (Yeast), this protein is Probable metalloreductase AIM14 (AIM14).